Reading from the N-terminus, the 372-residue chain is Cell division protein FtsZ 1 (372 aa).

GTP is bound by residues 51 to 55 (GAGCN), 138 to 140 (GTG), Glu169, Arg173, and Asp216. The segment at 352-372 (EETPAPSEEETTPVKIDIPEL) is disordered.

The protein belongs to the FtsZ family. As to quaternary structure, homodimer. Polymerizes to form a dynamic ring structure in a strictly GTP-dependent manner. Interacts directly with several other division proteins.

The protein resides in the cytoplasm. Functionally, essential cell division protein that forms a contractile ring structure (Z ring) at the future cell division site. The regulation of the ring assembly controls the timing and the location of cell division. One of the functions of the FtsZ ring is to recruit other cell division proteins to the septum to produce a new cell wall between the dividing cells. Binds GTP and shows GTPase activity. In Pyrococcus horikoshii (strain ATCC 700860 / DSM 12428 / JCM 9974 / NBRC 100139 / OT-3), this protein is Cell division protein FtsZ 1.